Consider the following 215-residue polypeptide: Pyrrolidone-carboxylate peptidase (215 aa).

Active-site residues include glutamate 80, cysteine 143, and histidine 167.

This sequence belongs to the peptidase C15 family. Homotetramer.

Its subcellular location is the cytoplasm. It carries out the reaction Release of an N-terminal pyroglutamyl group from a polypeptide, the second amino acid generally not being Pro.. Functionally, removes 5-oxoproline from various penultimate amino acid residues except L-proline. In Bacillus cereus (strain ATCC 14579 / DSM 31 / CCUG 7414 / JCM 2152 / NBRC 15305 / NCIMB 9373 / NCTC 2599 / NRRL B-3711), this protein is Pyrrolidone-carboxylate peptidase.